Here is a 355-residue protein sequence, read N- to C-terminus: Ribosomal RNA large subunit methyltransferase M (355 aa).

Residues Ser191, 224–227 (APGG), Asp243, Asp263, and Asp279 contribute to the S-adenosyl-L-methionine site. Lys308 serves as the catalytic Proton acceptor.

Belongs to the class I-like SAM-binding methyltransferase superfamily. RNA methyltransferase RlmE family. RlmM subfamily. In terms of assembly, monomer.

The protein resides in the cytoplasm. It carries out the reaction cytidine(2498) in 23S rRNA + S-adenosyl-L-methionine = 2'-O-methylcytidine(2498) in 23S rRNA + S-adenosyl-L-homocysteine + H(+). In terms of biological role, catalyzes the 2'-O-methylation at nucleotide C2498 in 23S rRNA. In Stenotrophomonas maltophilia (strain K279a), this protein is Ribosomal RNA large subunit methyltransferase M.